Consider the following 566-residue polypeptide: Bicarbonate transporter BicA (566 aa).

The Cytoplasmic portion of the chain corresponds to 1-15 (MQITNKIHFRNIRGD). Residues 16-36 (IFGGLTAAVIALPMALAFGVA) form a helical membrane-spanning segment. The Periplasmic segment spans residues 37-42 (SGAGAE). Residues 43–63 (AGLWGAVLVGFFAALFGGTPT) traverse the membrane as a helical segment. Residue leucine 64 is a topological domain, cytoplasmic. Residues 65-85 (ISEPTGPMTVVMTAVIAHFTA) traverse the membrane as a helical segment. Threonine 69 contacts hydrogencarbonate. Residues 86–93 (SAATPEEG) are Periplasmic-facing. The chain crosses the membrane as a helical span at residues 94 to 114 (LAIAFTVVMMAGVFQIIFGSL). At 115-126 (KLGKYVTMMPYT) the chain is on the cytoplasmic side. The helical transmembrane segment at 127–147 (VISGFMSGIGIILVILQLAPF) threads the bilayer. Over 148–169 (LGQASPGGGVIGTLQNLPTLLS) the chain is Periplasmic. A helical membrane pass occupies residues 170–190 (NIQPGETALALGTVAIIWFMP). The Cytoplasmic segment spans residues 191 to 196 (EKFKKV). The chain crosses the membrane as a helical span at residues 197–217 (IPPQLVALVLGTVIAFFVFPP). Over 218–247 (EVSDLRRIGEIRAGFPELVRPSFSPVEFQR) the chain is Periplasmic. The helical transmembrane segment at 248–268 (MILDAAVLGMLGCIDALLTSV) threads the bilayer. Residues aspartate 262, threonine 266, and glycine 304 each contribute to the Na(+) site. Residues 269-318 (VADSLTRTEHNSNKELIGQGLGNLFSGLFGGIAGAGATMGTVVNIQSGGR) are Cytoplasmic-facing. Position 305 (alanine 305) interacts with hydrogencarbonate. Threonine 306 is a binding site for Na(+). Residues 319–339 (TALSGLVRAFVLLVVILGAAS) traverse the membrane as a helical segment. Position 340 (leucine 340) is a topological domain, periplasmic. Residues 341 to 361 (TATIPLAVLAGIAFKVGVDII) traverse the membrane as a helical segment. Topologically, residues 362 to 371 (DWSFLKRAHE) are cytoplasmic. The chain crosses the membrane as a helical span at residues 372-392 (ISPKGALIMYGVILLTVLVDL). A topological domain (periplasmic) is located at residue isoleucine 393. A helical transmembrane segment spans residues 394-414 (VAVGVGVFVANVLTIERMSNL). Residues 415–566 (QSEKVQTVSD…GVTAPSSEMG (152 aa)) are Cytoplasmic-facing. The STAS domain maps to 436–546 (KRWLDEGQGR…MSREEALKNA (111 aa)).

This sequence belongs to the SLC26A/SulP transporter (TC 2.A.53) family.

The protein resides in the cell inner membrane. Low/medium affinity, Na(+)-dependent bicarbonate transporter. This chain is Bicarbonate transporter BicA (bicA), found in Picosynechococcus sp. (strain ATCC 27264 / PCC 7002 / PR-6) (Agmenellum quadruplicatum).